We begin with the raw amino-acid sequence, 106 residues long: Protein translocase subunit SecE (106 aa).

Transmembrane regions (helical) follow at residues 20–40 (LPIR…LAAI) and 75–95 (IVIG…SIIV).

It belongs to the SecE/SEC61-gamma family. As to quaternary structure, component of the Sec protein translocase complex. Heterotrimer consisting of SecY, SecE and SecG subunits. The heterotrimers can form oligomers, although 1 heterotrimer is thought to be able to translocate proteins. Interacts with the ribosome. Interacts with SecDF, and other proteins may be involved. Interacts with SecA.

The protein localises to the cell inner membrane. Functionally, essential subunit of the Sec protein translocation channel SecYEG. Clamps together the 2 halves of SecY. May contact the channel plug during translocation. This chain is Protein translocase subunit SecE, found in Haemophilus influenzae (strain ATCC 51907 / DSM 11121 / KW20 / Rd).